A 516-amino-acid polypeptide reads, in one-letter code: Cytochrome P450 1A2 (516 aa).

S69 carries O-linked (GlcNAc) serine glycosylation. Substrate is bound at residue F226. Position 458 (C458) interacts with heme.

Belongs to the cytochrome P450 family. Interacts with PGRMC1; the interaction requires PGRMC1 homodimerization. It depends on heme as a cofactor.

It is found in the endoplasmic reticulum membrane. It localises to the microsome membrane. The catalysed reaction is an organic molecule + reduced [NADPH--hemoprotein reductase] + O2 = an alcohol + oxidized [NADPH--hemoprotein reductase] + H2O + H(+). It carries out the reaction 17beta-estradiol + reduced [NADPH--hemoprotein reductase] + O2 = 2-hydroxy-17beta-estradiol + oxidized [NADPH--hemoprotein reductase] + H2O + H(+). The enzyme catalyses 17beta-estradiol + reduced [NADPH--hemoprotein reductase] + O2 = 4-hydroxy-17beta-estradiol + oxidized [NADPH--hemoprotein reductase] + H2O + H(+). It catalyses the reaction estrone + reduced [NADPH--hemoprotein reductase] + O2 = 2-hydroxyestrone + oxidized [NADPH--hemoprotein reductase] + H2O + H(+). The catalysed reaction is estrone + reduced [NADPH--hemoprotein reductase] + O2 = 4-hydroxyestrone + oxidized [NADPH--hemoprotein reductase] + H2O + H(+). It carries out the reaction cholesterol + reduced [NADPH--hemoprotein reductase] + O2 = 25-hydroxycholesterol + oxidized [NADPH--hemoprotein reductase] + H2O + H(+). The enzyme catalyses all-trans-retinol + reduced [NADPH--hemoprotein reductase] + O2 = all-trans-retinal + oxidized [NADPH--hemoprotein reductase] + 2 H2O + H(+). It catalyses the reaction all-trans-retinal + reduced [NADPH--hemoprotein reductase] + O2 = all-trans-retinoate + oxidized [NADPH--hemoprotein reductase] + H2O + 2 H(+). The catalysed reaction is (5Z,8Z,11Z,14Z)-eicosatetraenoate + reduced [NADPH--hemoprotein reductase] + O2 = (14R,15S)-epoxy-(5Z,8Z,11Z)-eicosatrienoate + oxidized [NADPH--hemoprotein reductase] + H2O + H(+). It carries out the reaction (5Z,8Z,11Z,14Z)-eicosatetraenoate + reduced [NADPH--hemoprotein reductase] + O2 = (14S,15R)-epoxy-(5Z,8Z,11Z)-eicosatrienoate + oxidized [NADPH--hemoprotein reductase] + H2O + H(+). The enzyme catalyses (5Z,8Z,11Z,14Z,17Z)-eicosapentaenoate + reduced [NADPH--hemoprotein reductase] + O2 = (17R,18S)-epoxy-(5Z,8Z,11Z,14Z)-eicosatetraenoate + oxidized [NADPH--hemoprotein reductase] + H2O + H(+). It catalyses the reaction (4Z,7Z,10Z,13Z,16Z,19Z)-docosahexaenoate + reduced [NADPH--hemoprotein reductase] + O2 = (19R,20S)-epoxy-(4Z,7Z,10Z,13Z,16Z)-docosapentaenoate + oxidized [NADPH--hemoprotein reductase] + H2O + H(+). The catalysed reaction is (5S)-hydroperoxy-(6E,8Z,11Z,14Z)-eicosatetraenoate = 5-oxo-(6E,8Z,11Z,14Z)-eicosatetraenoate + H2O. It carries out the reaction (12S)-hydroperoxy-(5Z,8Z,10E,14Z)-eicosatetraenoate = 12-oxo-(5Z,8Z,10E,14Z)-eicosatetraenoate + H2O. The enzyme catalyses (15S)-hydroperoxy-(5Z,8Z,11Z,13E)-eicosatetraenoate = 15-oxo-(5Z,8Z,11Z,13E)-eicosatetraenoate + H2O. It catalyses the reaction (13S)-hydroperoxy-(9Z,11E)-octadecadienoate = 13-oxo-(9Z,11E)-octadecadienoate + H2O. The catalysed reaction is (5Z,8Z,11Z,14Z)-eicosatetraenoate + reduced [NADPH--hemoprotein reductase] + O2 = 13-hydroxy-(5Z,8Z,11Z,14Z)-eicosatetraenoate + oxidized [NADPH--hemoprotein reductase] + H2O + H(+). It carries out the reaction (5Z,8Z,11Z,14Z)-eicosatetraenoate + reduced [NADPH--hemoprotein reductase] + O2 = 19-hydroxy-(5Z,8Z,11Z,14Z)-eicosatetraenoate + oxidized [NADPH--hemoprotein reductase] + H2O + H(+). The enzyme catalyses (9Z,12Z)-octadecadienoate + reduced [NADPH--hemoprotein reductase] + O2 = 11-hydroxy-(9Z,12Z)-octadecadienoate + oxidized [NADPH--hemoprotein reductase] + H2O + H(+). Its pathway is cofactor metabolism; retinol metabolism. It participates in steroid metabolism; cholesterol metabolism. The protein operates within lipid metabolism; arachidonate metabolism. A cytochrome P450 monooxygenase involved in the metabolism of various endogenous substrates, including fatty acids, steroid hormones and vitamins. Mechanistically, uses molecular oxygen inserting one oxygen atom into a substrate, and reducing the second into a water molecule, with two electrons provided by NADPH via cytochrome P450 reductase (NADPH--hemoprotein reductase). Catalyzes the hydroxylation of carbon-hydrogen bonds. Exhibits high catalytic activity for the formation of hydroxyestrogens from estrone (E1) and 17beta-estradiol (E2), namely 2-hydroxy E1 and E2. Metabolizes cholesterol toward 25-hydroxycholesterol, a physiological regulator of cellular cholesterol homeostasis. May act as a major enzyme for all-trans retinoic acid biosynthesis in the liver. Catalyzes two successive oxidative transformation of all-trans retinol to all-trans retinal and then to the active form all-trans retinoic acid. Primarily catalyzes stereoselective epoxidation of the last double bond of polyunsaturated fatty acids (PUFA), displaying a strong preference for the (R,S) stereoisomer. Catalyzes bisallylic hydroxylation and omega-1 hydroxylation of PUFA. May also participate in eicosanoids metabolism by converting hydroperoxide species into oxo metabolites (lipoxygenase-like reaction, NADPH-independent). Plays a role in the oxidative metabolism of xenobiotics. Catalyzes the N-hydroxylation of heterocyclic amines and the O-deethylation of phenacetin. Metabolizes caffeine via N3-demethylation. In Balaenoptera acutorostrata (Common minke whale), this protein is Cytochrome P450 1A2 (CYP1A2).